A 307-amino-acid chain; its full sequence is Transmembrane and coiled-coil domain-containing protein 5B (307 aa).

Positions 20 to 212 (TLEAIKQNLK…SKAQNDSSQV (193 aa)) form a coiled coil. A helical transmembrane segment spans residues 246–268 (YLFFMVMIVIRLLGYVFFHLQYV).

This sequence belongs to the TMCO5 family.

It localises to the membrane. This Mus musculus (Mouse) protein is Transmembrane and coiled-coil domain-containing protein 5B (Tmco5b).